Here is a 494-residue protein sequence, read N- to C-terminus: Trigger factor (494 aa).

A PPIase FKBP-type domain is found at 169–254 (GDRITMDYVG…VKDVAAPGAV (86 aa)). A disordered region spans residues 440-494 (LLAEDEGEAKAETKKAAPKKKAAAKSEAAEAGEGEEAAPKKKAAPKKKASEDSAE).

It belongs to the FKBP-type PPIase family. Tig subfamily.

It localises to the cytoplasm. The catalysed reaction is [protein]-peptidylproline (omega=180) = [protein]-peptidylproline (omega=0). Its function is as follows. Involved in protein export. Acts as a chaperone by maintaining the newly synthesized protein in an open conformation. Functions as a peptidyl-prolyl cis-trans isomerase. This Rhizobium etli (strain ATCC 51251 / DSM 11541 / JCM 21823 / NBRC 15573 / CFN 42) protein is Trigger factor.